Reading from the N-terminus, the 75-residue chain is MVRYFRRRKFCRFTVEKIKEIDYKDLSMLKNYITESGKIVPSRITGTSARYQRQLARAIKRARYLSLLPYTDQHQ.

Belongs to the bacterial ribosomal protein bS18 family. Part of the 30S ribosomal subunit. Forms a tight heterodimer with protein bS6.

Its function is as follows. Binds as a heterodimer with protein bS6 to the central domain of the 16S rRNA, where it helps stabilize the platform of the 30S subunit. The chain is Small ribosomal subunit protein bS18 from Buchnera aphidicola subsp. Baizongia pistaciae (strain Bp).